Consider the following 709-residue polypeptide: Threonine--tRNA ligase, mitochondrial 1 (709 aa).

A mitochondrion-targeting transit peptide spans 1–21 (MLLRLTARSIRRFTTSSSSLP). The region spanning 73-135 (DPIKVTLPDG…EGDCKLELFK (63 aa)) is the TGS domain. Zn(2+) contacts are provided by C407, H458, and H584.

This sequence belongs to the class-II aminoacyl-tRNA synthetase family.

Its subcellular location is the mitochondrion. The protein resides in the cytoplasm. It is found in the cytosol. It catalyses the reaction tRNA(Thr) + L-threonine + ATP = L-threonyl-tRNA(Thr) + AMP + diphosphate + H(+). This Arabidopsis thaliana (Mouse-ear cress) protein is Threonine--tRNA ligase, mitochondrial 1.